Consider the following 443-residue polypeptide: Tol-Pal system protein TolB (443 aa).

The first 31 residues, 1–31 (MMIMTTRTFFSWFIVICAFWLTSFSSVPVHA), serve as a signal peptide directing secretion. Residues 422-443 (ERQLPTPNDASDPAWSPLLNIQ) form a disordered region.

It belongs to the TolB family. As to quaternary structure, the Tol-Pal system is composed of five core proteins: the inner membrane proteins TolA, TolQ and TolR, the periplasmic protein TolB and the outer membrane protein Pal. They form a network linking the inner and outer membranes and the peptidoglycan layer.

Its subcellular location is the periplasm. In terms of biological role, part of the Tol-Pal system, which plays a role in outer membrane invagination during cell division and is important for maintaining outer membrane integrity. In Bartonella henselae (strain ATCC 49882 / DSM 28221 / CCUG 30454 / Houston 1) (Rochalimaea henselae), this protein is Tol-Pal system protein TolB.